The following is a 453-amino-acid chain: MNIVILAAGTGKRMRSALPKVLHPLAGRPLLSHVIDTARTLQPSRLVVVVGHGAEQVQAAVAAPDVQFAVQAEQLGTGHAVRQALPLLDPAQPTLVLYGDVPLTRASTLQRLVDAAREGRYGILTVTLDDPTGYGRIVRDAAGFVTRIVEQKDASPEQLKIAEINTGIIVTPTAQLSMWLGALKNENAQGEYYLTDVVELAIEAGFEVVTAQPDEEWETLGVNSKAQLAELERIHQRNIAEALLVDGVTLADPARLDVRGTLRCGRDVSIDVNCVFEGNVTLADNVTIGANCVIRNASVGAGTRIDAFTHIDGAELGAHTVIGPYARLRPGAQLADEAHVGNFVEVKNAVIGHGSKANHLTYIGDADIGARVNIGAGTITCNYDGANKFRTVIEDDVFVGSDTQLVAPVRVGRGVTIAAGTTIWKDVADGLLALNEKTQTAKSGYVRPVKKKS.

Positions 1–225 (MNIVILAAGT…EWETLGVNSK (225 aa)) are pyrophosphorylase. UDP-N-acetyl-alpha-D-glucosamine is bound by residues 6-9 (LAAG), Lys-20, Gln-71, 76-77 (GT), 98-100 (YGD), Gly-135, Glu-150, Asn-165, and Asn-223. Asp-100 provides a ligand contact to Mg(2+). Asn-223 contributes to the Mg(2+) binding site. The segment at 226–246 (AQLAELERIHQRNIAEALLVD) is linker. Positions 247–453 (GVTLADPARL…GYVRPVKKKS (207 aa)) are N-acetyltransferase. Positions 329 and 347 each coordinate UDP-N-acetyl-alpha-D-glucosamine. The active-site Proton acceptor is His-359. Positions 362 and 373 each coordinate UDP-N-acetyl-alpha-D-glucosamine. Acetyl-CoA is bound by residues Ala-376, 382 to 383 (NY), Ser-401, and Ala-419.

In the N-terminal section; belongs to the N-acetylglucosamine-1-phosphate uridyltransferase family. The protein in the C-terminal section; belongs to the transferase hexapeptide repeat family. As to quaternary structure, homotrimer. Mg(2+) is required as a cofactor.

Its subcellular location is the cytoplasm. The enzyme catalyses alpha-D-glucosamine 1-phosphate + acetyl-CoA = N-acetyl-alpha-D-glucosamine 1-phosphate + CoA + H(+). It carries out the reaction N-acetyl-alpha-D-glucosamine 1-phosphate + UTP + H(+) = UDP-N-acetyl-alpha-D-glucosamine + diphosphate. Its pathway is nucleotide-sugar biosynthesis; UDP-N-acetyl-alpha-D-glucosamine biosynthesis; N-acetyl-alpha-D-glucosamine 1-phosphate from alpha-D-glucosamine 6-phosphate (route II): step 2/2. It participates in nucleotide-sugar biosynthesis; UDP-N-acetyl-alpha-D-glucosamine biosynthesis; UDP-N-acetyl-alpha-D-glucosamine from N-acetyl-alpha-D-glucosamine 1-phosphate: step 1/1. It functions in the pathway bacterial outer membrane biogenesis; LPS lipid A biosynthesis. Catalyzes the last two sequential reactions in the de novo biosynthetic pathway for UDP-N-acetylglucosamine (UDP-GlcNAc). The C-terminal domain catalyzes the transfer of acetyl group from acetyl coenzyme A to glucosamine-1-phosphate (GlcN-1-P) to produce N-acetylglucosamine-1-phosphate (GlcNAc-1-P), which is converted into UDP-GlcNAc by the transfer of uridine 5-monophosphate (from uridine 5-triphosphate), a reaction catalyzed by the N-terminal domain. The protein is Bifunctional protein GlmU of Burkholderia lata (strain ATCC 17760 / DSM 23089 / LMG 22485 / NCIMB 9086 / R18194 / 383).